A 232-amino-acid chain; its full sequence is Protein DOG1-like 4 (232 aa).

A DOG1 domain is found at 9 to 229 (EEKFLEFYES…RRWGNRRHYV (221 aa)).

The sequence is that of Protein DOG1-like 4 from Arabidopsis thaliana (Mouse-ear cress).